Consider the following 292-residue polypeptide: Protein PHR1-LIKE 3 (292 aa).

An HTH myb-type domain is found at 34–94; it reads TDPKPRLRWT…HLQKFRLGRQ (61 aa). The segment at residues 65 to 90 is a DNA-binding region (H-T-H motif); that stretch reads PKTIMRTMGVKGLTLYHLKSHLQKFR. Residues 137-157 are a coiled coil; that stretch reads TEALRAQMEVQRRLHEQLEVQ. The LHEQLE signature appears at 150–155; sequence LHEQLE.

It belongs to the MYB-CC family. In terms of assembly, homo- and heterodimers. Interacts with PHL2, but not with PHR1.

It localises to the nucleus. In terms of biological role, transcriptional activator. Probable component of the central regulatory system controlling transcriptional responses to Pi starvation. Binds in a sequence-specific manner to phosphate starvation-regulated promoters. Required for female gametophyte development and function. This Arabidopsis thaliana (Mouse-ear cress) protein is Protein PHR1-LIKE 3.